Consider the following 174-residue polypeptide: N-terminal acetyltransferase B complex catalytic subunit NAA20 (174 aa).

An N-acetyltransferase domain is found at 2–151; sequence TTIRRFSCND…DGLDMRKALS (150 aa).

This sequence belongs to the acetyltransferase family. ARD1 subfamily.

The catalysed reaction is N-terminal L-methionyl-L-asparaginyl-[protein] + acetyl-CoA = N-terminal N(alpha)-acetyl-L-methionyl-L-asparaginyl-[protein] + CoA + H(+). The enzyme catalyses N-terminal L-methionyl-L-glutaminyl-[protein] + acetyl-CoA = N-terminal N(alpha)-acetyl-L-methionyl-L-glutaminyl-[protein] + CoA + H(+). It catalyses the reaction N-terminal L-methionyl-L-aspartyl-[protein] + acetyl-CoA = N-terminal N(alpha)-acetyl-L-methionyl-L-aspartyl-[protein] + CoA + H(+). It carries out the reaction N-terminal L-methionyl-L-glutamyl-[protein] + acetyl-CoA = N-terminal N(alpha)-acetyl-L-methionyl-L-glutamyl-[protein] + CoA + H(+). Its function is as follows. Catalytic subunit of the NatB N-alpha-acetyltransferase complex. Involved in plant immunity through the regulation of SNC1 stability. This Arabidopsis thaliana (Mouse-ear cress) protein is N-terminal acetyltransferase B complex catalytic subunit NAA20.